A 283-amino-acid chain; its full sequence is Digeranylgeranylglyceryl phosphate synthase (283 aa).

8 helical membrane-spanning segments follow: residues 21–41, 45–65, 97–117, 135–155, 158–178, 204–224, 226–246, and 261–281; these read ITAS…EIDI, LLVF…NDIF, LILG…IAVI, IGNF…GVAG, VMPV…REIV, LYFA…PYIL, IFGI…IYAM, and VSKF…VGAI.

The protein belongs to the UbiA prenyltransferase family. DGGGP synthase subfamily. Mg(2+) is required as a cofactor.

The protein resides in the cell membrane. It catalyses the reaction sn-3-O-(geranylgeranyl)glycerol 1-phosphate + (2E,6E,10E)-geranylgeranyl diphosphate = 2,3-bis-O-(geranylgeranyl)-sn-glycerol 1-phosphate + diphosphate. Its pathway is membrane lipid metabolism; glycerophospholipid metabolism. Its function is as follows. Prenyltransferase that catalyzes the transfer of the geranylgeranyl moiety of geranylgeranyl diphosphate (GGPP) to the C2 hydroxyl of (S)-3-O-geranylgeranylglyceryl phosphate (GGGP). This reaction is the second ether-bond-formation step in the biosynthesis of archaeal membrane lipids. The sequence is that of Digeranylgeranylglyceryl phosphate synthase from Methanocaldococcus jannaschii (strain ATCC 43067 / DSM 2661 / JAL-1 / JCM 10045 / NBRC 100440) (Methanococcus jannaschii).